Reading from the N-terminus, the 362-residue chain is Probable aromatic amino acid hydroxylase (362 aa).

The Fe cation site is built by histidine 200 and histidine 205.

Belongs to the biopterin-dependent aromatic amino acid hydroxylase family. It depends on Fe(2+) as a cofactor.

In Chlamydia pneumoniae (Chlamydophila pneumoniae), this protein is Probable aromatic amino acid hydroxylase.